Reading from the N-terminus, the 311-residue chain is AT-hook motif nuclear-localized protein 27 (311 aa).

The interval 40–105 is disordered; it reads HHHQHQQHQQ…KNKAKPPIIV (66 aa). Basic and acidic residues predominate over residues 55–75; the sequence is DDSRESDHSNKDHHQQGRPDS. The segment at residues 86–98 is a DNA-binding region (a.T hook); it reads KRPRGRPPGSKNK. A PPC domain is found at 110–258; the sequence is PNALRSHVLE…EEGGGGGGGG (149 aa). Residues 178-183 form a required for the binding to non-AHL interactors region; sequence GRFEIL. Residues 246-311 form a disordered region; that stretch reads EEEEEGGGGG…GAGTPSRPPF (66 aa). Positions 252–262 are enriched in gly residues; it reads GGGGGGGGGGP. The segment covering 263–277 has biased composition (low complexity); that stretch reads PQMQQAPSASPPSGV. The segment covering 278–292 has biased composition (gly residues); it reads TGQGQLGGNVGGYGF.

Homodimer. Interacts with AHL12, AHL25, AHL29, TCP4, TCP13, EF114, ATAF2/NAC081, histone H2B.1, histone H3.3 and histone H4. As to expression, expressed in the hypocotyl and the vascular tissue of seedling.

It is found in the nucleus. Transcription factor that specifically binds AT-rich DNA sequences related to the nuclear matrix attachment regions (MARs). Negatively regulates plant innate immunity (PTI) to pathogens through the down-regulation of the PAMP-triggered FRK1 expression. Acts redundantly with AHL18, AHL22 and AHL29 in the regulation of flowering and regulation of the hypocotyl elongation. Acts as a chromatin remodeling factor that negatively regulates the leaf senescence. Acts redundantly with AHL29/SOB3 to modulate hypocotyl growth inhibition in response to light. The chain is AT-hook motif nuclear-localized protein 27 from Arabidopsis thaliana (Mouse-ear cress).